A 141-amino-acid chain; its full sequence is HTH-type transcriptional repressor NsrR (141 aa).

The region spanning 2–129 (QLTSFTDYGL…DNYTLADLVE (128 aa)) is the HTH rrf2-type domain. The segment at residues 28–51 (ISEVTDVYGVSRNHMVKIINQLSR) is a DNA-binding region (H-T-H motif). C91, C96, and C102 together coordinate [2Fe-2S] cluster.

It depends on [2Fe-2S] cluster as a cofactor.

Nitric oxide-sensitive repressor of genes involved in protecting the cell against nitrosative stress. May require iron for activity. The sequence is that of HTH-type transcriptional repressor NsrR from Escherichia fergusonii (strain ATCC 35469 / DSM 13698 / CCUG 18766 / IAM 14443 / JCM 21226 / LMG 7866 / NBRC 102419 / NCTC 12128 / CDC 0568-73).